We begin with the raw amino-acid sequence, 209 residues long: Large ribosomal subunit protein uL3 (209 aa).

The segment at G118–N152 is disordered.

It belongs to the universal ribosomal protein uL3 family. As to quaternary structure, part of the 50S ribosomal subunit. Forms a cluster with proteins L14 and L19.

Its function is as follows. One of the primary rRNA binding proteins, it binds directly near the 3'-end of the 23S rRNA, where it nucleates assembly of the 50S subunit. In Bacillus licheniformis (strain ATCC 14580 / DSM 13 / JCM 2505 / CCUG 7422 / NBRC 12200 / NCIMB 9375 / NCTC 10341 / NRRL NRS-1264 / Gibson 46), this protein is Large ribosomal subunit protein uL3.